The primary structure comprises 228 residues: 3-dehydroquinate dehydratase (228 aa).

Residues S26, 51–53 (EIR), and R84 each bind 3-dehydroquinate. The active-site Proton donor/acceptor is the H127. K150 functions as the Schiff-base intermediate with substrate in the catalytic mechanism. Residues R190, T209, and Q213 each coordinate 3-dehydroquinate.

The protein belongs to the type-I 3-dehydroquinase family. In terms of assembly, homodimer.

It catalyses the reaction 3-dehydroquinate = 3-dehydroshikimate + H2O. It participates in metabolic intermediate biosynthesis; chorismate biosynthesis; chorismate from D-erythrose 4-phosphate and phosphoenolpyruvate: step 3/7. Its function is as follows. Involved in the third step of the chorismate pathway, which leads to the biosynthesis of aromatic amino acids. Catalyzes the cis-dehydration of 3-dehydroquinate (DHQ) and introduces the first double bond of the aromatic ring to yield 3-dehydroshikimate. In Thermoplasma acidophilum (strain ATCC 25905 / DSM 1728 / JCM 9062 / NBRC 15155 / AMRC-C165), this protein is 3-dehydroquinate dehydratase.